Here is a 78-residue protein sequence, read N- to C-terminus: Exodeoxyribonuclease 7 small subunit (78 aa).

The protein belongs to the XseB family. As to quaternary structure, heterooligomer composed of large and small subunits.

The protein resides in the cytoplasm. The enzyme catalyses Exonucleolytic cleavage in either 5'- to 3'- or 3'- to 5'-direction to yield nucleoside 5'-phosphates.. In terms of biological role, bidirectionally degrades single-stranded DNA into large acid-insoluble oligonucleotides, which are then degraded further into small acid-soluble oligonucleotides. The protein is Exodeoxyribonuclease 7 small subunit of Psychromonas ingrahamii (strain DSM 17664 / CCUG 51855 / 37).